A 392-amino-acid polypeptide reads, in one-letter code: ATP phosphoribosyltransferase regulatory subunit (392 aa).

The protein belongs to the class-II aminoacyl-tRNA synthetase family. HisZ subfamily. In terms of assembly, heteromultimer composed of HisG and HisZ subunits.

It is found in the cytoplasm. It participates in amino-acid biosynthesis; L-histidine biosynthesis; L-histidine from 5-phospho-alpha-D-ribose 1-diphosphate: step 1/9. Its function is as follows. Required for the first step of histidine biosynthesis. May allow the feedback regulation of ATP phosphoribosyltransferase activity by histidine. The polypeptide is ATP phosphoribosyltransferase regulatory subunit (Gloeobacter violaceus (strain ATCC 29082 / PCC 7421)).